The sequence spans 662 residues: UvrABC system protein B (662 aa).

The Helicase ATP-binding domain maps to 25-182 (KGIEKREKFQ…KKLVEIQYER (158 aa)). An ATP-binding site is contributed by 38-45 (GVTGSGKT). A Beta-hairpin motif is present at residues 91–114 (YYDYYQPEAYVAQSDTYIEKDASI). Residues 429–595 (QIDDLYTSIQ…TIIKDIREVI (167 aa)) form the Helicase C-terminal domain. The UVR domain maps to 622-657 (DKLIEKYEEEMKEAAQNLQFEKAAHLRDVIYKLKKD).

It belongs to the UvrB family. As to quaternary structure, forms a heterotetramer with UvrA during the search for lesions. Interacts with UvrC in an incision complex.

It localises to the cytoplasm. The UvrABC repair system catalyzes the recognition and processing of DNA lesions. A damage recognition complex composed of 2 UvrA and 2 UvrB subunits scans DNA for abnormalities. Upon binding of the UvrA(2)B(2) complex to a putative damaged site, the DNA wraps around one UvrB monomer. DNA wrap is dependent on ATP binding by UvrB and probably causes local melting of the DNA helix, facilitating insertion of UvrB beta-hairpin between the DNA strands. Then UvrB probes one DNA strand for the presence of a lesion. If a lesion is found the UvrA subunits dissociate and the UvrB-DNA preincision complex is formed. This complex is subsequently bound by UvrC and the second UvrB is released. If no lesion is found, the DNA wraps around the other UvrB subunit that will check the other stand for damage. In Clostridium botulinum (strain Kyoto / Type A2), this protein is UvrABC system protein B.